The chain runs to 568 residues: Proline--tRNA ligase (568 aa).

Belongs to the class-II aminoacyl-tRNA synthetase family. ProS type 1 subfamily. As to quaternary structure, homodimer.

Its subcellular location is the cytoplasm. The enzyme catalyses tRNA(Pro) + L-proline + ATP = L-prolyl-tRNA(Pro) + AMP + diphosphate. Its function is as follows. Catalyzes the attachment of proline to tRNA(Pro) in a two-step reaction: proline is first activated by ATP to form Pro-AMP and then transferred to the acceptor end of tRNA(Pro). As ProRS can inadvertently accommodate and process non-cognate amino acids such as alanine and cysteine, to avoid such errors it has two additional distinct editing activities against alanine. One activity is designated as 'pretransfer' editing and involves the tRNA(Pro)-independent hydrolysis of activated Ala-AMP. The other activity is designated 'posttransfer' editing and involves deacylation of mischarged Ala-tRNA(Pro). The misacylated Cys-tRNA(Pro) is not edited by ProRS. This Halothermothrix orenii (strain H 168 / OCM 544 / DSM 9562) protein is Proline--tRNA ligase.